A 309-amino-acid chain; its full sequence is Ornithine carbamoyltransferase (309 aa).

Carbamoyl phosphate contacts are provided by residues 56–59, Gln-83, Arg-107, and 134–137; these read STRT and HPCQ. Residues Asn-165, Asp-223, and 227 to 228 each bind L-ornithine; that span reads SM. Carbamoyl phosphate is bound by residues 263 to 264 and Arg-291; that span reads CL.

Belongs to the aspartate/ornithine carbamoyltransferase superfamily. OTCase family.

The protein resides in the cytoplasm. It carries out the reaction carbamoyl phosphate + L-ornithine = L-citrulline + phosphate + H(+). Its pathway is amino-acid biosynthesis; L-arginine biosynthesis; L-arginine from L-ornithine and carbamoyl phosphate: step 1/3. Functionally, reversibly catalyzes the transfer of the carbamoyl group from carbamoyl phosphate (CP) to the N(epsilon) atom of ornithine (ORN) to produce L-citrulline. The protein is Ornithine carbamoyltransferase of Burkholderia cenocepacia (strain HI2424).